The following is a 291-amino-acid chain: 4-hydroxy-tetrahydrodipicolinate synthase (291 aa).

Residue T44 coordinates pyruvate. The Proton donor/acceptor role is filled by Y132. K160 acts as the Schiff-base intermediate with substrate in catalysis. I202 contributes to the pyruvate binding site.

It belongs to the DapA family. Homotetramer; dimer of dimers.

Its subcellular location is the cytoplasm. The catalysed reaction is L-aspartate 4-semialdehyde + pyruvate = (2S,4S)-4-hydroxy-2,3,4,5-tetrahydrodipicolinate + H2O + H(+). It participates in amino-acid biosynthesis; L-lysine biosynthesis via DAP pathway; (S)-tetrahydrodipicolinate from L-aspartate: step 3/4. Its function is as follows. Catalyzes the condensation of (S)-aspartate-beta-semialdehyde [(S)-ASA] and pyruvate to 4-hydroxy-tetrahydrodipicolinate (HTPA). In Parvibaculum lavamentivorans (strain DS-1 / DSM 13023 / NCIMB 13966), this protein is 4-hydroxy-tetrahydrodipicolinate synthase.